The primary structure comprises 276 residues: Expansin-A25 (276 aa).

The signal sequence occupies residues 1–27 (MKLLEQMVYVECFMIIMATLLVSMSYG). An Expansin-like EG45 domain is found at 73-183 (QGACGYGDLF…RRISCARTGG (111 aa)). Residues 193–272 (YFLMILPYNV…NWGFGQTFDG (80 aa)) enclose the Expansin-like CBD domain.

Belongs to the expansin family. Expansin A subfamily.

It localises to the secreted. The protein localises to the cell wall. Its subcellular location is the membrane. Functionally, causes loosening and extension of plant cell walls by disrupting non-covalent bonding between cellulose microfibrils and matrix glucans. No enzymatic activity has been found. The polypeptide is Expansin-A25 (EXPA25) (Arabidopsis thaliana (Mouse-ear cress)).